The primary structure comprises 181 residues: Keratin-associated protein 4-5 (181 aa).

26 consecutive repeat copies span residues 5-9 (CCGSV), 20-24 (CCRPS), 25-29 (CCQTT), 30-34 (CCRTT), 35-39 (CCRPS), 40-44 (CCKPQ), 45-49 (CCQSV), 55-59 (CCHPS), 60-64 (CCISS), 65-69 (CCRPY), 70-74 (CCESS), 75-79 (CCRPC), 80-84 (CCQTT), 85-89 (CCRTT), 90-94 (CCRTT), 95-99 (CCCPS), 100-104 (CCVSS), 105-109 (CCRPQ), 110-114 (CCQSV), 115-119 (CCQPT), 120-124 (CCRPS), 125-129 (CCISS), 130-134 (CCHPS), 135-139 (CCESS), 140-144 (CCRPC), and 145-149 (CCVRP). The interval 5 to 154 (CCGSVSSEQS…CCVRPVCGRV (150 aa)) is 26 X 5 AA repeats of C-C-[GRQVCHIEK]-[SPTR]-[VSTQYC].

Belongs to the KRTAP type 4 family. As to quaternary structure, interacts with hair keratins. In terms of tissue distribution, expressed in the hair follicles.

Functionally, in the hair cortex, hair keratin intermediate filaments are embedded in an interfilamentous matrix, consisting of hair keratin-associated proteins (KRTAP), which are essential for the formation of a rigid and resistant hair shaft through their extensive disulfide bond cross-linking with abundant cysteine residues of hair keratins. The matrix proteins include the high-sulfur and high-glycine-tyrosine keratins. The sequence is that of Keratin-associated protein 4-5 (KRTAP4-5) from Homo sapiens (Human).